Consider the following 311-residue polypeptide: Coproporphyrin III ferrochelatase (311 aa).

Fe-coproporphyrin III is bound by residues Tyr-12, Arg-29, 45–46 (RY), Ser-53, and Tyr-124. The Fe(2+) site is built by His-182 and Glu-263.

Belongs to the ferrochelatase family.

Its subcellular location is the cytoplasm. It carries out the reaction Fe-coproporphyrin III + 2 H(+) = coproporphyrin III + Fe(2+). The protein operates within porphyrin-containing compound metabolism; protoheme biosynthesis. Functionally, involved in coproporphyrin-dependent heme b biosynthesis. Catalyzes the insertion of ferrous iron into coproporphyrin III to form Fe-coproporphyrin III. This chain is Coproporphyrin III ferrochelatase, found in Bacillus mycoides (strain KBAB4) (Bacillus weihenstephanensis).